The following is a 186-amino-acid chain: MVDVKTIIEESQEKMDMAVMYLEEALAHIRAGKASTRLLDGIRVDSYGSMVPISNVAAVTTPDARSITIKPWDKSMFRVIEKAIIDSDLGIMPENNGEIIRIGIPPLTEERRKQLAKQCKAEGETAKVSIRNARRDGIDALKKAVKDGLAEDEQKNAEAKLQKVHDKYIAKIEEMLAEKDKEIMTV.

Belongs to the RRF family.

It localises to the cytoplasm. Responsible for the release of ribosomes from messenger RNA at the termination of protein biosynthesis. May increase the efficiency of translation by recycling ribosomes from one round of translation to another. This is Ribosome-recycling factor from Bacteroides fragilis (strain ATCC 25285 / DSM 2151 / CCUG 4856 / JCM 11019 / LMG 10263 / NCTC 9343 / Onslow / VPI 2553 / EN-2).